A 368-amino-acid polypeptide reads, in one-letter code: Germination protease (368 aa).

The propeptide occupies Met1 to Asp16.

The protein belongs to the peptidase A25 family. Homotetramer. In terms of processing, autoproteolytically processed. The inactive tetrameric zymogen termed p46 autoprocesses to a smaller form termed p41, which is active only during spore germination.

The catalysed reaction is Endopeptidase action with P4 Glu or Asp, P1 preferably Glu &gt; Asp, P1' hydrophobic and P2' Ala.. In terms of biological role, initiates the degradation of small, acid-soluble proteins during spore germination. The sequence is that of Germination protease (gpr) from Bacillus subtilis (strain 168).